The chain runs to 326 residues: Acetyl-coenzyme A carboxylase carboxyl transferase subunit beta (326 aa).

The CoA carboxyltransferase N-terminal domain maps to 29–298; that stretch reads LWIKCEACGT…TLISDESLET (270 aa). Zn(2+) is bound by residues Cys33, Cys36, Cys52, and Cys55. The C4-type zinc-finger motif lies at 33-55; it reads CEACGTLTYTKDLQANQMVCPEC. Residues 302–326 are disordered; sequence CHLPFQAESHNLSTTDNKIQPTPQG. A compositionally biased stretch (polar residues) spans 309-326; that stretch reads ESHNLSTTDNKIQPTPQG.

Belongs to the AccD/PCCB family. As to quaternary structure, acetyl-CoA carboxylase is a heterohexamer composed of biotin carboxyl carrier protein (AccB), biotin carboxylase (AccC) and two subunits each of ACCase subunit alpha (AccA) and ACCase subunit beta (AccD). The cofactor is Zn(2+).

It is found in the cytoplasm. It carries out the reaction N(6)-carboxybiotinyl-L-lysyl-[protein] + acetyl-CoA = N(6)-biotinyl-L-lysyl-[protein] + malonyl-CoA. It functions in the pathway lipid metabolism; malonyl-CoA biosynthesis; malonyl-CoA from acetyl-CoA: step 1/1. Functionally, component of the acetyl coenzyme A carboxylase (ACC) complex. Biotin carboxylase (BC) catalyzes the carboxylation of biotin on its carrier protein (BCCP) and then the CO(2) group is transferred by the transcarboxylase to acetyl-CoA to form malonyl-CoA. The polypeptide is Acetyl-coenzyme A carboxylase carboxyl transferase subunit beta (Trichodesmium erythraeum (strain IMS101)).